The following is a 1960-amino-acid chain: Exophilin-5 (1960 aa).

In terms of domain architecture, RabBD spans G7–I63. Composition is skewed to polar residues over residues A325–A334, D342–I366, and S635–A645. Disordered regions lie at residues A325–I366, T616–A645, H672–P720, D734–T835, and F910–V976. The span at S673–T682 shows a compositional bias: low complexity. Residues N692–L707 are compositionally biased toward basic and acidic residues. A phosphoserine mark is found at S799 and S802. 2 stretches are compositionally biased toward polar residues: residues E808–T835 and F910–G920. Residues Q921–K932 show a composition bias toward basic and acidic residues. A compositionally biased stretch (polar residues) spans S933–N945. S1027 bears the Phosphoserine mark. Residues Q1035 to M1095 form a disordered region. A compositionally biased stretch (polar residues) spans G1062–S1074. Phosphoserine occurs at positions 1083 and 1117. Disordered regions lie at residues A1291–E1375, P1389–S1493, and E1510–L1759. Residues P1318–L1336 are compositionally biased toward basic and acidic residues. Positions K1356–K1365 are enriched in polar residues. Residues H1392–K1403 show a composition bias toward basic and acidic residues. Composition is skewed to polar residues over residues R1470–S1493 and S1520–A1533. S1493 is subject to Phosphoserine. Composition is skewed to basic and acidic residues over residues E1534–T1546 and T1561–S1571. The segment covering G1572–I1586 has biased composition (basic residues). The segment covering E1637–S1657 has biased composition (polar residues). Residues S1724, S1739, S1789, and S1819 each carry the phosphoserine modification. Polar residues predominate over residues T1732–C1741. 2 disordered regions span residues E1828–S1847 and V1906–L1960. Residues W1939–Y1950 show a composition bias toward acidic residues. The segment covering L1951–L1960 has biased composition (basic and acidic residues).

In terms of assembly, interacts with RAB27A.

Functionally, may act as Rab effector protein and play a role in vesicle trafficking. The protein is Exophilin-5 of Mus musculus (Mouse).